The chain runs to 431 residues: 3-phosphoshikimate 1-carboxyvinyltransferase (431 aa).

3-phosphoshikimate-binding residues include K22, S23, and R27. K22 is a binding site for phosphoenolpyruvate. Residues G94 and R122 each coordinate phosphoenolpyruvate. S167, Q169, D315, and K342 together coordinate 3-phosphoshikimate. Q169 is a phosphoenolpyruvate binding site. Catalysis depends on D315, which acts as the Proton acceptor. 2 residues coordinate phosphoenolpyruvate: R346 and R388.

The protein belongs to the EPSP synthase family. In terms of assembly, monomer.

It is found in the cytoplasm. It catalyses the reaction 3-phosphoshikimate + phosphoenolpyruvate = 5-O-(1-carboxyvinyl)-3-phosphoshikimate + phosphate. The protein operates within metabolic intermediate biosynthesis; chorismate biosynthesis; chorismate from D-erythrose 4-phosphate and phosphoenolpyruvate: step 6/7. Its function is as follows. Catalyzes the transfer of the enolpyruvyl moiety of phosphoenolpyruvate (PEP) to the 5-hydroxyl of shikimate-3-phosphate (S3P) to produce enolpyruvyl shikimate-3-phosphate and inorganic phosphate. In Pelobacter propionicus (strain DSM 2379 / NBRC 103807 / OttBd1), this protein is 3-phosphoshikimate 1-carboxyvinyltransferase.